A 645-amino-acid chain; its full sequence is Meiosis induction protein kinase IME2/SME1 (645 aa).

The segment at Met-1–Asn-24 is disordered. A compositionally biased stretch (low complexity) spans Gln-8 to Ser-17. Residues Tyr-38–Phe-386 enclose the Protein kinase domain. Residues Leu-44–Val-52 and Lys-67 contribute to the ATP site. The active-site Proton acceptor is Asp-193.

This sequence belongs to the protein kinase superfamily. Ser/Thr protein kinase family.

It carries out the reaction L-seryl-[protein] + ATP = O-phospho-L-seryl-[protein] + ADP + H(+). The catalysed reaction is L-threonyl-[protein] + ATP = O-phospho-L-threonyl-[protein] + ADP + H(+). Its function is as follows. Protein kinase which is essential for the initiation of meiosis and sporulation. This chain is Meiosis induction protein kinase IME2/SME1 (IME2), found in Saccharomyces cerevisiae (strain ATCC 204508 / S288c) (Baker's yeast).